The following is a 1745-amino-acid chain: Collagen alpha-3(V) chain (1745 aa).

Positions 1–29 are cleaved as a signal peptide; it reads MGNRRDLGQPRAGLCLLLAALQLLPGTQA. Residues 62 to 224 enclose the Laminin G-like domain; that stretch reads DRAFRIGQAS…QACERYLPDC (163 aa). Residues asparagine 102 and asparagine 141 are each glycosylated (N-linked (GlcNAc...) asparagine). The tract at residues 211–391 is nonhelical region; that stretch reads QAAFQACERY…AVIEKGQQFE (181 aa). 4 disordered regions span residues 230–304, 322–362, 387–439, and 476–1492; these read AATV…TPTP, RSLD…EYPS, GQQF…RGPP, and SMKG…PAEL. Residues 244 to 267 are compositionally biased toward basic residues; that stretch reads PRRKGKGKGRKKGRGRKGKGRKKN. Residue serine 349 is glycosylated (O-linked (Xyl...) (chondroitin sulfate) serine). Collagen-like domains follow at residues 391–440 and 482–538; these read EGPP…GPPG and GPVG…DGAR. Residues 392–1489 form a triple-helical region region; sequence GPPGAPGPQG…AGPPGPPGAP (1098 aa). Positions 406 to 424 are enriched in pro residues; sequence SGPPGPPGFPGDPGPPGPA. Low complexity-rich tracts occupy residues 426-439, 489-499, and 597-619; these read LPGIPGIDGIRGPP, RPGPVGLPGHP, and EPGPRGLLGPRGSPGPTGRPGVT. The span at 724–733 shows a compositional bias: basic and acidic residues; the sequence is QGEKGEKGED. Over residues 765–792 the composition is skewed to low complexity; the sequence is PKGQAGQAGEEGPPGSAGEKGKLGVPGL. Collagen-like domains lie at 824-877, 905-950, and 951-989; these read GQPG…QGPP, GFQG…GLPG, and LEGREGAKGELGPPGPLGKEGPAGLRGFPGPKGGPGDPG. Low complexity predominate over residues 967 to 979; it reads LGKEGPAGLRGFP. Residues 1016–1025 are compositionally biased toward gly residues; the sequence is GPAGGIGLPG. 2 stretches are compositionally biased toward low complexity: residues 1116-1126 and 1141-1152; these read ADGAQGRRGPP and VGVIGPPGLQGL. The segment covering 1190 to 1199 has biased composition (gly residues); the sequence is GLPGGVGQPG. Residues 1213-1222 show a composition bias toward pro residues; the sequence is PGPPGAPGIP. A compositionally biased stretch (low complexity) spans 1234 to 1243; that stretch reads SGPSGAAGPP. The span at 1318-1330 shows a compositional bias: basic and acidic residues; sequence MGREGREGEKGAK. The span at 1405 to 1416 shows a compositional bias: low complexity; that stretch reads IGLIGLIGPPGE. The segment covering 1429-1443 has biased composition (pro residues); sequence QGPPGPKGDPGPPGP. Residues 1430–1488 enclose the Collagen-like 6 domain; sequence GPPGPKGDPGPPGPIGSLGHPGPPGVAGPLGQKGSKGSPGSMGPRGDTGPAGPPGPPGA. Positions 1458 to 1479 are enriched in low complexity; the sequence is PLGQKGSKGSPGSMGPRGDTGP. In terms of domain architecture, Fibrillar collagen NC1 spans 1514 to 1744; that stretch reads EEVLASLTSL…GFELGPVCFS (231 aa). 2 cysteine pairs are disulfide-bonded: cysteine 1585-cysteine 1742 and cysteine 1651-cysteine 1696.

This sequence belongs to the fibrillar collagen family. As to quaternary structure, trimers of two alpha 1(V) and one alpha 2(V) chains in most tissues and trimers of one alpha 1(V), one alpha 2(V), and one alpha 3(V) chains in placenta. Post-translationally, prolines at the third position of the tripeptide repeating unit (G-X-Y) are hydroxylated in some or all of the chains. In terms of tissue distribution, detected in fibroblasts (at protein level). Detected in urine (at protein level).

The protein localises to the secreted. Its subcellular location is the extracellular space. It is found in the extracellular matrix. Its function is as follows. Type V collagen is a member of group I collagen (fibrillar forming collagen). It is a minor connective tissue component of nearly ubiquitous distribution. Type V collagen binds to DNA, heparan sulfate, thrombospondin, heparin, and insulin. The sequence is that of Collagen alpha-3(V) chain (COL5A3) from Homo sapiens (Human).